We begin with the raw amino-acid sequence, 190 residues long: Shikimate kinase (190 aa).

Position 13–18 (13–18) interacts with ATP; the sequence is GAGKTT. Mg(2+) is bound at residue Thr17. Substrate is bound by residues Asp35, Arg59, and Gly81. Arg119 lines the ATP pocket. Arg138 serves as a coordination point for substrate.

The protein belongs to the shikimate kinase family. As to quaternary structure, monomer. Mg(2+) is required as a cofactor.

It localises to the cytoplasm. It catalyses the reaction shikimate + ATP = 3-phosphoshikimate + ADP + H(+). Its pathway is metabolic intermediate biosynthesis; chorismate biosynthesis; chorismate from D-erythrose 4-phosphate and phosphoenolpyruvate: step 5/7. Catalyzes the specific phosphorylation of the 3-hydroxyl group of shikimic acid using ATP as a cosubstrate. The protein is Shikimate kinase of Ralstonia nicotianae (strain ATCC BAA-1114 / GMI1000) (Ralstonia solanacearum).